The chain runs to 678 residues: MTKNLLVELGLEELPAYVVTPSEKQLGEKMAAFLKGKRLSFEAIQTFSTPRRLAVRVTGLADKQSDLTEDFKGPAKKIALDSDGNFTKAAQGFVRGKGLTVEDIEFREIKGEEYVYVTKEEIGQAVEAIVPGIVDVLKSLTFPVSMHWAGNSFEYIRPVHTLTVLLDEQEFDLDFLDIKGSRVSRGHRFLGQETKIQSALSYEEDLRKQFVIADPCEREQMIVDQIKEIEAKHGVRIEIDADLLNEVLNLVEYPTAFMGSFDAKYLEVPEEVLVTSMKEHQRYFVVRDQDGKLLPNFISVRNGNAERLKNVIKGNEKVLVARLEDGEFFWREDQKLVISDLVEKLNNVTFHEKIGSLREHMIRTGQITVLLAEKASLSVDETVDLARAAAIYKFDLLTGMVGEFDELQGIMGEKYTLLAGETPAVAAAIREHYMPTSAEGELPESKVGAVLAIADKLDTILSFFSVGLIPSGSNDPYALRRATQGVVRILDAFGWHIAMDELIDSLYALKFDSLTYENKAEVMDFIKARVDKMMGSTPKDIKEAVLAGSNFVVADMLEAASALVEVSKEEDFKPSVESLSRAFNLAEKAEGVATVDSALFENDQEKALAEAVETLILSGPASQQLKQLFALSPVIDAFFENTMVMAEDQAVRQNRLAILSQLTKKAAKFACFNQINTK.

It belongs to the class-II aminoacyl-tRNA synthetase family. In terms of assembly, tetramer of two alpha and two beta subunits.

It localises to the cytoplasm. It catalyses the reaction tRNA(Gly) + glycine + ATP = glycyl-tRNA(Gly) + AMP + diphosphate. In Streptococcus pneumoniae (strain ATCC 700669 / Spain 23F-1), this protein is Glycine--tRNA ligase beta subunit.